The primary structure comprises 404 residues: CCA-adding enzyme (404 aa).

Positions 27 and 30 each coordinate ATP. CTP-binding residues include G27 and R30. Mg(2+)-binding residues include D40 and D42. R111, D154, R157, R160, and R163 together coordinate ATP. Residues R111, D154, R157, R160, and R163 each coordinate CTP.

It belongs to the tRNA nucleotidyltransferase/poly(A) polymerase family. Bacterial CCA-adding enzyme type 3 subfamily. In terms of assembly, homodimer. Mg(2+) serves as cofactor.

It catalyses the reaction a tRNA precursor + 2 CTP + ATP = a tRNA with a 3' CCA end + 3 diphosphate. The enzyme catalyses a tRNA with a 3' CCA end + 2 CTP + ATP = a tRNA with a 3' CCACCA end + 3 diphosphate. Catalyzes the addition and repair of the essential 3'-terminal CCA sequence in tRNAs without using a nucleic acid template. Adds these three nucleotides in the order of C, C, and A to the tRNA nucleotide-73, using CTP and ATP as substrates and producing inorganic pyrophosphate. tRNA 3'-terminal CCA addition is required both for tRNA processing and repair. Also involved in tRNA surveillance by mediating tandem CCA addition to generate a CCACCA at the 3' terminus of unstable tRNAs. While stable tRNAs receive only 3'-terminal CCA, unstable tRNAs are marked with CCACCA and rapidly degraded. The protein is CCA-adding enzyme of Geobacillus kaustophilus (strain HTA426).